The primary structure comprises 185 residues: ATP synthase subunit b 2 (185 aa).

The disordered stretch occupies residues 1–23 (MAEGHGDAKGATAHTAADGGHKA). Low complexity predominate over residues 9–18 (KGATAHTAAD). Residues 32–51 (TFASQLVSLTIAFVALYLIV) traverse the membrane as a helical segment.

It belongs to the ATPase B chain family. F-type ATPases have 2 components, F(1) - the catalytic core - and F(0) - the membrane proton channel. F(1) has five subunits: alpha(3), beta(3), gamma(1), delta(1), epsilon(1). F(0) has three main subunits: a(1), b(2) and c(10-14). The alpha and beta chains form an alternating ring which encloses part of the gamma chain. F(1) is attached to F(0) by a central stalk formed by the gamma and epsilon chains, while a peripheral stalk is formed by the delta and b chains.

The protein resides in the cell inner membrane. In terms of biological role, f(1)F(0) ATP synthase produces ATP from ADP in the presence of a proton or sodium gradient. F-type ATPases consist of two structural domains, F(1) containing the extramembraneous catalytic core and F(0) containing the membrane proton channel, linked together by a central stalk and a peripheral stalk. During catalysis, ATP synthesis in the catalytic domain of F(1) is coupled via a rotary mechanism of the central stalk subunits to proton translocation. Functionally, component of the F(0) channel, it forms part of the peripheral stalk, linking F(1) to F(0). The b'-subunit is a diverged and duplicated form of b found in plants and photosynthetic bacteria. In Rhodopseudomonas palustris (strain HaA2), this protein is ATP synthase subunit b 2 (atpF2).